The following is a 236-amino-acid chain: Baculoviral IAP repeat-containing protein 8 (236 aa).

A BIR repeat occupies 7 to 70 (WLITFGTWMY…KWYPGCKYLL (64 aa)). Zn(2+) contacts are provided by C39, C42, H59, and C66. Residues 189–224 (CKICMDRHIAVVFIPCGHLVTCKQCAEAVDRCPMCN) form an RING-type zinc finger.

The protein belongs to the IAP family. As to quaternary structure, binds to caspase-9.

The protein localises to the cytoplasm. Functionally, protects against apoptosis mediated by BAX. The sequence is that of Baculoviral IAP repeat-containing protein 8 (BIRC8) from Gorilla gorilla gorilla (Western lowland gorilla).